The primary structure comprises 396 residues: Elongation factor Tu (396 aa).

In terms of domain architecture, tr-type G spans 10–206; the sequence is KPHVNVGTIG…ALDSYIPTPK (197 aa). The tract at residues 19 to 26 is G1; it reads GHVDHGKT. 19-26 contributes to the GTP binding site; it reads GHVDHGKT. Position 26 (Thr-26) interacts with Mg(2+). The G2 stretch occupies residues 60-64; the sequence is GITIS. The interval 81 to 84 is G3; it reads DCPG. GTP is bound by residues 81–85 and 136–139; these read DCPGH and NKAD. Residues 136 to 139 are G4; the sequence is NKAD. Residues 174–176 form a G5 region; that stretch reads SAL.

The protein belongs to the TRAFAC class translation factor GTPase superfamily. Classic translation factor GTPase family. EF-Tu/EF-1A subfamily. In terms of assembly, monomer.

It localises to the cytoplasm. The catalysed reaction is GTP + H2O = GDP + phosphate + H(+). Functionally, GTP hydrolase that promotes the GTP-dependent binding of aminoacyl-tRNA to the A-site of ribosomes during protein biosynthesis. This chain is Elongation factor Tu, found in Vesicomyosocius okutanii subsp. Calyptogena okutanii (strain HA).